The primary structure comprises 517 residues: Cytochrome P450 monooxygenase stcB (517 aa).

Cys-461 contributes to the heme binding site.

The protein belongs to the cytochrome P450 family. The cofactor is heme.

It participates in mycotoxin biosynthesis; sterigmatocystin biosynthesis. Functionally, cytochrome P450 monooxygenase; part of the gene cluster that mediates the biosynthesis of sterigmatocystin (ST), a polyketide-derived furanocoumarin which is part of the most toxic and carcinogenic compounds among the known mycotoxins. The first step in the biosynthesis of sterigmatocystin is the production of hexanoate by the fatty acid synthase (FAS) units stcJ and stcK. The polyketide backbone is assembled by the non-reducing polyketide synthase stcA by condensation of the starter hexanoyl-CoA and 7 malonyl-CoA extender units followed by cyclization and release of norsolorinic acid. Norsolorinic acid is the first stable intermediate in the biosynthesis of sterigmatocystin and is converted into averantin (AVN) by the ketoreductase stcE which reduces the hexanoate ketone to an alcohol. Averantin is then oxidized into 5'-hydroxyaverantin (HAVN) by the cytochrome P450 monooxygenase stcF. 5'-hydroxyaverantin is further converted to 5'-oxyaverantin (OAVN) by the 5'-hydroxyaverantin dehydrogenase stcG. The next step is the conversion of OAVN into averufin (AVF) which is catalyzed by a yet to be identified enzyme. The cytochrome P450 monooxygenase stcB and the flavin-binding monooxygenase stcW are both required for the conversion of averufin to 1-hydroxyversicolorone. The esterase stcI probably catalyzes the formation of versiconal hemiacetal acetate from 1-hydroxyversicolorone. The oxydoreductase stcN then probably catalyzes the biosynthetic step from versiconal to versicolorin B (VERB). The next step is performed by the versicolorin B desaturase stcL to produce versicolorin A (VERA). The ketoreductase stcU and the cytochrome P450 monooxygenase stcS are involved in the conversion of versicolorin A to demethylsterigmatocystin. The Baeyer-Villiger oxidas stcQ and the reductase stcR might be involved in the biosynthetic step from versicolorin A to demethylsterigmatocystin. The final step in the biosynthesis of sterigmatocystin is the methylation of demethylsterigmatocystin catalyzed by the methyltransferase stcP. The sequence is that of Cytochrome P450 monooxygenase stcB from Emericella nidulans (strain FGSC A4 / ATCC 38163 / CBS 112.46 / NRRL 194 / M139) (Aspergillus nidulans).